The primary structure comprises 156 residues: Small ribosomal subunit protein uS7 (156 aa).

It belongs to the universal ribosomal protein uS7 family. As to quaternary structure, part of the 30S ribosomal subunit. Contacts proteins S9 and S11.

One of the primary rRNA binding proteins, it binds directly to 16S rRNA where it nucleates assembly of the head domain of the 30S subunit. Is located at the subunit interface close to the decoding center, probably blocks exit of the E-site tRNA. The chain is Small ribosomal subunit protein uS7 from Dictyoglomus thermophilum (strain ATCC 35947 / DSM 3960 / H-6-12).